Consider the following 258-residue polypeptide: Synaptosomal-associated protein 29 (258 aa).

The tract at residues 1 to 41 (MSAYPKSYNPFDDDGEDEGARPAPWRDARDLPDGPDAPADR) is disordered. Positions 18–32 (EGARPAPWRDARDLP) are enriched in basic and acidic residues. Residues 76 to 107 (ASSEELARQRGVLERTEKMVDKMDQDLKISQK) adopt a coiled-coil conformation. A phosphoserine mark is found at Ser77, Ser78, and Ser114. Phosphothreonine is present on residues Thr130 and Thr137. A disordered region spans residues 150–191 (ISTSKEQEAKYQASHPNLRKLDDTDPVPRGAGSAMSTDAYPK). A phosphoserine mark is found at Ser163, Ser182, Ser185, Ser204, and Ser210. In terms of domain architecture, t-SNARE coiled-coil homology spans 196-258 (RAYHQKIDSN…KSTERKVRQL (63 aa)).

The protein belongs to the SNAP-25 family. Forms a SNARE complex, composed of VAMP8, SNAP29 and STX17, involved in fusion of autophagosome with lysosome. Interacts with multiple syntaxins including STX6. Interacts with EIPR1. Interacts with STX17; this interaction is increased in the absence of TMEM39A. In terms of assembly, (Microbial infection) Interacts with Hantaan hantavirus nucleoprotein; this interaction prevents the breakdown of the viral glycoprotein N by virus-triggered autophagy. As to quaternary structure, (Microbial infection) The interaction with STX17 is decreased in presence of SARS coronavirus-2/SARS-CoV-2 ORF3A protein. In terms of tissue distribution, found in brain, heart, kidney, liver, lung, placenta, skeletal muscle, spleen and pancreas.

Its subcellular location is the cytoplasm. The protein localises to the golgi apparatus membrane. The protein resides in the cytoplasmic vesicle. It localises to the autophagosome membrane. It is found in the cell projection. Its subcellular location is the cilium membrane. Its function is as follows. SNAREs, soluble N-ethylmaleimide-sensitive factor-attachment protein receptors, are essential proteins for fusion of cellular membranes. SNAREs localized on opposing membranes assemble to form a trans-SNARE complex, an extended, parallel four alpha-helical bundle that drives membrane fusion. SNAP29 is a SNARE involved in autophagy through the direct control of autophagosome membrane fusion with the lysososome membrane. Also plays a role in ciliogenesis by regulating membrane fusions. The protein is Synaptosomal-associated protein 29 of Homo sapiens (Human).